We begin with the raw amino-acid sequence, 127 residues long: Protein pkiA (127 aa).

An HIT domain is found at 16-127; it reads IFAKIISGAI…GGRQMNWPPG (112 aa).

The chain is Protein pkiA (pkiA) from Dictyostelium discoideum (Social amoeba).